The primary structure comprises 466 residues: Histidine--tRNA ligase (466 aa).

It belongs to the class-II aminoacyl-tRNA synthetase family. Homodimer.

It localises to the cytoplasm. The enzyme catalyses tRNA(His) + L-histidine + ATP = L-histidyl-tRNA(His) + AMP + diphosphate + H(+). This is Histidine--tRNA ligase from Bifidobacterium longum subsp. infantis (strain ATCC 15697 / DSM 20088 / JCM 1222 / NCTC 11817 / S12).